Here is a 190-residue protein sequence, read N- to C-terminus: Crossover junction endodeoxyribonuclease RuvC (190 aa).

Residues Asp8, Glu67, and Asp139 contribute to the active site. The Mg(2+) site is built by Asp8, Glu67, and Asp139.

The protein belongs to the RuvC family. As to quaternary structure, homodimer which binds Holliday junction (HJ) DNA. The HJ becomes 2-fold symmetrical on binding to RuvC with unstacked arms; it has a different conformation from HJ DNA in complex with RuvA. In the full resolvosome a probable DNA-RuvA(4)-RuvB(12)-RuvC(2) complex forms which resolves the HJ. Mg(2+) serves as cofactor.

Its subcellular location is the cytoplasm. It carries out the reaction Endonucleolytic cleavage at a junction such as a reciprocal single-stranded crossover between two homologous DNA duplexes (Holliday junction).. The RuvA-RuvB-RuvC complex processes Holliday junction (HJ) DNA during genetic recombination and DNA repair. Endonuclease that resolves HJ intermediates. Cleaves cruciform DNA by making single-stranded nicks across the HJ at symmetrical positions within the homologous arms, yielding a 5'-phosphate and a 3'-hydroxyl group; requires a central core of homology in the junction. The consensus cleavage sequence is 5'-(A/T)TT(C/G)-3'. Cleavage occurs on the 3'-side of the TT dinucleotide at the point of strand exchange. HJ branch migration catalyzed by RuvA-RuvB allows RuvC to scan DNA until it finds its consensus sequence, where it cleaves and resolves the cruciform DNA. The polypeptide is Crossover junction endodeoxyribonuclease RuvC (Haemophilus influenzae (strain PittGG)).